Here is a 359-residue protein sequence, read N- to C-terminus: Aminomethyltransferase (359 aa).

The protein belongs to the GcvT family. The glycine cleavage system is composed of four proteins: P, T, L and H.

It catalyses the reaction N(6)-[(R)-S(8)-aminomethyldihydrolipoyl]-L-lysyl-[protein] + (6S)-5,6,7,8-tetrahydrofolate = N(6)-[(R)-dihydrolipoyl]-L-lysyl-[protein] + (6R)-5,10-methylene-5,6,7,8-tetrahydrofolate + NH4(+). Its function is as follows. The glycine cleavage system catalyzes the degradation of glycine. The chain is Aminomethyltransferase from Alcanivorax borkumensis (strain ATCC 700651 / DSM 11573 / NCIMB 13689 / SK2).